The primary structure comprises 898 residues: MAETTVKKLADIVGTPVEKLLTQMKDAGLPHGDASEVVSDEQKQQLLAHLRKSHGAEDEGSGKKITLKRKSTSTIKTTGAAGKSKTVNVEVRKKRTYMKRDVVEAEEREEAERLAAEEAARIAEEEKRAAQEAAKRAADDEAARLKEDEARAKAEQERKAAGEKAAEEKSKRVSVPKVSATKKPAKEETPEEKAKREEAERKQREADEAKRKQEAEARKKAEEEAARRTAEEAARIAAELEQRGEQEEKKPAVEDDKGSSIVNAAQEASYQREERQSRRRRRKPKVAGVVHGKMKSSMNKQHGFKTPTEKKIYEVEVPETITVGDLAQRMNIKAKSLIKSLMKMGEMATVNQPIDQETAFLLVEEMGHKPVASKGQEELLEDHLAADLVTRDSVDSEHRAPVVTIMGHVDHGKTSLLDYIRKAKVASGEAGGITQHIGAYHVEHEKGMITFLDTPGHAAFTAMRARGAKATDIVVIVVAADDGVMPQTEEAINHAKASGAPIIIAVNKIDKEQADPDRVRNELATKDVIPEEWGGEYQFINVSAHSGEGVDDLLDAILLQSELLELQAQASGSATGVVIESRIEKGRGTVASILVQGGELQIGDMLLAGAHFGRVRAMVDENGKAIKKAGPSIPVEVLGLNGAPEAGEQIQVVTDERKAREVAEFRQERDRELKLKRQQASKLENLFENMGSAETKTVNIVLKTDVRGSLEALTSALNDLGTDEVKVNLVSSGVGAINESDVNLAMTSEGVLLGFNVRADSKAKRVCEQEGIDLRYYSVIYELIDDVKQAMSGLLAPEKREEILGVAQVRDVFRSSKFGAVAGCMVVEGTLYRNRPIRVLRDDVVVFEGELESLRRFKDDVPEVRNGMECGIAVKSYNDVKEGDKIEVFEVKEVARFL.

Disordered regions lie at residues 51 to 70 (RKSH…LKRK) and 114 to 303 (LAAE…KQHG). 2 stretches are compositionally biased toward basic and acidic residues: residues 114-171 (LAAE…EKSK) and 184-258 (PAKE…DDKG). A tr-type G domain is found at 398–567 (HRAPVVTIMG…LLQSELLELQ (170 aa)). Residues 407–414 (GHVDHGKT) form a G1 region. Residue 407 to 414 (GHVDHGKT) coordinates GTP. The tract at residues 432–436 (GITQH) is G2. The tract at residues 453-456 (DTPG) is G3. GTP contacts are provided by residues 453 to 457 (DTPGH) and 507 to 510 (NKID). The interval 507 to 510 (NKID) is G4. The interval 543–545 (SAH) is G5.

Belongs to the TRAFAC class translation factor GTPase superfamily. Classic translation factor GTPase family. IF-2 subfamily.

It localises to the cytoplasm. Its function is as follows. One of the essential components for the initiation of protein synthesis. Protects formylmethionyl-tRNA from spontaneous hydrolysis and promotes its binding to the 30S ribosomal subunits. Also involved in the hydrolysis of GTP during the formation of the 70S ribosomal complex. The sequence is that of Translation initiation factor IF-2 from Alcanivorax borkumensis (strain ATCC 700651 / DSM 11573 / NCIMB 13689 / SK2).